The following is a 383-amino-acid chain: F-box/kelch-repeat protein At4g19330 (383 aa).

A disordered region spans residues 1 to 27 (MAYLSFKSNMERTPRESNTPCPPPQPS). The 52-residue stretch at 28–79 (PSLFSSLPDDIVLNILARISTSYYQTLSLVSKTFRLLILSKELDMERSYLGT) folds into the F-box domain. Kelch repeat units follow at residues 147 to 192 (ETYE…VLDG), 193 to 239 (KLYV…NIQT), and 272 to 318 (STCE…SEIG).

Its function is as follows. Involved in seed germination. This Arabidopsis thaliana (Mouse-ear cress) protein is F-box/kelch-repeat protein At4g19330.